We begin with the raw amino-acid sequence, 91 residues long: Small ribosomal subunit protein bS16 (91 aa).

It belongs to the bacterial ribosomal protein bS16 family.

This Limosilactobacillus fermentum (strain NBRC 3956 / LMG 18251) (Lactobacillus fermentum) protein is Small ribosomal subunit protein bS16.